The following is a 302-amino-acid chain: Riboflavin transporter (302 aa).

A run of 8 helical transmembrane segments spans residues 16–36 (AVVGALWMVLAGIAFSLLNVV), 44–64 (LAFPSASAAFWQYGFAFLFSL), 87–107 (VVLAALGVEAWVAGLAAVPIW), 109–129 (AIALVMTSPFFIILGARLFLG), 158–178 (IGWAALLPVLSALLWGASSLI), 191–213 (ITVWLLVLLTPINGGLALAAGFA), 227–247 (GLLTAVAQYFLTLAYAAADAA), and 264–284 (GWLFFGYAPAGYLWLGAALIL). 2 consecutive EamA domains span residues 30–151 (FSLL…MIIL) and 170–291 (LLWG…LFIM).

This sequence belongs to the drug/metabolite transporter (DMT) superfamily. 10 TMS drug/metabolite exporter (DME) (TC 2.A.7.3) family.

It localises to the cell membrane. Its function is as follows. Transports riboflavin into the cell. Can also transport FMN and FAD. Required for normal nodule development during colonization of pea plant roots. This is Riboflavin transporter from Rhizobium johnstonii (strain DSM 114642 / LMG 32736 / 3841) (Rhizobium leguminosarum bv. viciae).